The sequence spans 149 residues: uncharacterized protein (149 aa).

2 consecutive transmembrane segments (helical) span residues 91–111 and 122–142; these read IFILLCLLICLGLALMGLFHY and ISILFWSGSAFLIIVLIICLL.

It is found in the membrane. This is an uncharacterized protein from Dictyostelium discoideum (Social amoeba).